Consider the following 491-residue polypeptide: Cobyric acid synthase (491 aa).

Residues 249-439 (PIDIAVIKLP…IHGVFDGVEF (191 aa)) enclose the GATase cobBQ-type domain. Catalysis depends on Cys329, which acts as the Nucleophile. Residue His431 is part of the active site.

It belongs to the CobB/CobQ family. CobQ subfamily.

The protein operates within cofactor biosynthesis; adenosylcobalamin biosynthesis. Functionally, catalyzes amidations at positions B, D, E, and G on adenosylcobyrinic A,C-diamide. NH(2) groups are provided by glutamine, and one molecule of ATP is hydrogenolyzed for each amidation. In Clostridium tetani (strain Massachusetts / E88), this protein is Cobyric acid synthase.